Here is a 180-residue protein sequence, read N- to C-terminus: MAVRARRLQPAKVAAVESLTRDLGEASSYIFTEYRGLTVEQLTALRRALREFSCVYRVVRNNFANIAFTSLNMTVGEYLVGPTAIALVDTEHANGVARVLFDFAKEVPALVVKGAILDGEVFDASKVEAYSKLPGKKELVSMFLSALNATTVKFVRVLQAVMDKRDEGVEVSVVSGGDSS.

It belongs to the universal ribosomal protein uL10 family. In terms of assembly, part of the ribosomal stalk of the 50S ribosomal subunit. The N-terminus interacts with L11 and the large rRNA to form the base of the stalk. The C-terminus forms an elongated spine to which L12 dimers bind in a sequential fashion forming a multimeric L10(L12)X complex.

Functionally, forms part of the ribosomal stalk, playing a central role in the interaction of the ribosome with GTP-bound translation factors. In Treponema pallidum (strain Nichols), this protein is Large ribosomal subunit protein uL10 (rplJ).